A 309-amino-acid chain; its full sequence is MAFGNFDTICNITSLPLCSVVGSVNETSYFTRGIVPDCYARSVELANTMVFQIGNAFVHFGGLIILLIIIFNVRAKYTAIGRTEMLFFFYLIICLIVSSLVVDCGVSPPSSGSYAYFVAVQLGLASASCICILYNGLLCFQFWEDGSRKSMWSLRVICFCWFVVNFIVALVTFKSWDSALDSRKTMAMFVITYLINAIILAFYVISQIVLVVFALDSYWPLGAILLGVFFFVAGQVLTYEFSDDICRGASHYIDGLFFGSACNIFTVMMIYKFWDMITVDDLEFSVANVEHGVTAFGGDDEKRGSTIFS.

7 helical membrane passes run 51–71, 86–106, 114–134, 156–176, 194–214, 218–238, and 251–271; these read FQIG…IIIF, LFFF…DCGV, YAYF…CILY, VICF…FKSW, LINA…VVFA, YWPL…QVLT, and HYID…MMIY.

The protein belongs to the CHS7 family. Interacts with CHS3.

It is found in the endoplasmic reticulum membrane. In terms of biological role, chaperone required for the export of the chitin synthase CHS3 from the endoplasmic reticulum. This chain is Chitin synthase export chaperone (CHS7), found in Debaryomyces hansenii (strain ATCC 36239 / CBS 767 / BCRC 21394 / JCM 1990 / NBRC 0083 / IGC 2968) (Yeast).